A 258-amino-acid chain; its full sequence is Type III pantothenate kinase (258 aa).

An ATP-binding site is contributed by 6 to 13 (DVGNTNIV). Residues Tyr-100 and 107-110 (GADR) contribute to the substrate site. Asp-109 (proton acceptor) is an active-site residue. Asp-129 provides a ligand contact to K(+). An ATP-binding site is contributed by Thr-132. Residue Thr-184 coordinates substrate.

It belongs to the type III pantothenate kinase family. As to quaternary structure, homodimer. NH4(+) is required as a cofactor. K(+) serves as cofactor.

The protein resides in the cytoplasm. The enzyme catalyses (R)-pantothenate + ATP = (R)-4'-phosphopantothenate + ADP + H(+). The protein operates within cofactor biosynthesis; coenzyme A biosynthesis; CoA from (R)-pantothenate: step 1/5. Functionally, catalyzes the phosphorylation of pantothenate (Pan), the first step in CoA biosynthesis. The chain is Type III pantothenate kinase from Desulfitobacterium hafniense (strain DSM 10664 / DCB-2).